Consider the following 604-residue polypeptide: Aspartate--tRNA(Asp/Asn) ligase (604 aa).

E177 provides a ligand contact to L-aspartate. The tract at residues 201-204 is aspartate; it reads QLFK. Position 223 (R223) interacts with L-aspartate. ATP contacts are provided by residues 223 to 225 and Q232; that span reads RDE. H457 is an L-aspartate binding site. Residue E495 coordinates ATP. R502 is a binding site for L-aspartate. 547–550 contacts ATP; that stretch reads GLDR.

It belongs to the class-II aminoacyl-tRNA synthetase family. Type 1 subfamily. As to quaternary structure, homodimer.

The protein localises to the cytoplasm. It catalyses the reaction tRNA(Asx) + L-aspartate + ATP = L-aspartyl-tRNA(Asx) + AMP + diphosphate. Aspartyl-tRNA synthetase with relaxed tRNA specificity since it is able to aspartylate not only its cognate tRNA(Asp) but also tRNA(Asn). Reaction proceeds in two steps: L-aspartate is first activated by ATP to form Asp-AMP and then transferred to the acceptor end of tRNA(Asp/Asn). This Synechococcus sp. (strain RCC307) protein is Aspartate--tRNA(Asp/Asn) ligase.